A 340-amino-acid polypeptide reads, in one-letter code: Heat-inducible transcription repressor HrcA (340 aa).

Belongs to the HrcA family.

In terms of biological role, negative regulator of class I heat shock genes (grpE-dnaK-dnaJ and groELS operons). Prevents heat-shock induction of these operons. The chain is Heat-inducible transcription repressor HrcA from Burkholderia cenocepacia (strain ATCC BAA-245 / DSM 16553 / LMG 16656 / NCTC 13227 / J2315 / CF5610) (Burkholderia cepacia (strain J2315)).